A 428-amino-acid polypeptide reads, in one-letter code: CinA-like protein (428 aa).

Belongs to the CinA family.

This is CinA-like protein from Mycobacterium leprae (strain TN).